Consider the following 379-residue polypeptide: GDP-mannose transporter 1 (379 aa).

Residues 1–39 are Cytoplasmic-facing; that stretch reads MTDNRKPEDYTIEMDKLGQNKNYQAPPPPPQPRSSTASS. The segment at 17–38 is disordered; it reads LGQNKNYQAPPPPPQPRSSTAS. Residues 40–60 form a helical membrane-spanning segment; the sequence is ISNNAALSVLAYCGSSILMTV. The Lumenal segment spans residues 61–69; that stretch reads MNKYVLSSD. The helical transmembrane segment at 70–90 threads the bilayer; it reads FNLNFFLLCVQSLVCIIAIQL. The Cytoplasmic portion of the chain corresponds to 91–110; that stretch reads CKACGLITYRDFNLDEARKW. A helical membrane pass occupies residues 111 to 133; that stretch reads FPITLLLIGMIYTGSKALQFLSI. Residues 134 to 136 are Lumenal-facing; the sequence is PVY. The chain crosses the membrane as a helical span at residues 137-156; it reads TIFKNLTIILIAYGEVLWFG. The Cytoplasmic portion of the chain corresponds to 157–162; the sequence is GSVTNL. The chain crosses the membrane as a helical span at residues 163-182; it reads TLFSFGLMVFSSIIAAWADI. The Lumenal segment spans residues 183–198; that stretch reads KHAIESSGDATSKVST. Residues 199-219 form a helical membrane-spanning segment; it reads LNAGYIWMLINCLCTSSYVLG. Topologically, residues 220–233 are cytoplasmic; it reads MRKRIKLTNFKDFD. The helical transmembrane segment at 234-254 threads the bilayer; that stretch reads TMFYNNLLSIPVLIVCSGILE. At 255–272 the chain is on the lumenal side; sequence DWSPANVARNFPSADRNG. Residues 273–293 form a helical membrane-spanning segment; sequence IMFAMILSGLSTVFISYTSAW. Residues 294–301 are Cytoplasmic-facing; the sequence is CVRVTSST. The helical transmembrane segment at 302–322 threads the bilayer; it reads TYSMVGALNKLPIALSGLIFF. Residues 323–325 are Lumenal-facing; it reads DAP. Residues 326–346 traverse the membrane as a helical segment; sequence VTFPSVSAIMVGFVSGIVYAV. The Cytoplasmic portion of the chain corresponds to 347–379; sequence AKIKQNAKPKVGILPTTNPVSASSQSMRDSLRS.

This sequence belongs to the TPT transporter family. SLC35D subfamily. Homooligomer.

The protein resides in the golgi apparatus membrane. Its subcellular location is the cytoplasmic vesicle membrane. It localises to the endoplasmic reticulum membrane. Its function is as follows. Involved in the import of GDP-mannose from the cytoplasm into the Golgi lumen. The sequence is that of GDP-mannose transporter 1 (gmt1) from Emericella nidulans (strain FGSC A4 / ATCC 38163 / CBS 112.46 / NRRL 194 / M139) (Aspergillus nidulans).